An 821-amino-acid chain; its full sequence is MENITQPTQQSTQATQRFLIEKFSQEQIGENIVCRVICTTGQIPIRDLSADISQVLKEKRSIKKVWTFGRNPACDYHLGNISRLSNKHFQILLGEDGNLLLNDISTNGTWLNGQKVEKNSNQLLSQGDEITVGVGVESDILSLVIFINDKFKQCLEQNKVDRIRSNLKNTSKIASPGLTSSTASSMVANKTGIFKDFSIIDEVVGQGAFATVKKAIERTTGKTFAVKIISKRKVIGNMDGVTRELEVLQKLNHPRIVRLKGFYEDTESYYMVMEFVSGGDLMDFVAAHGAVGEDAGREISRQILTAIKYIHSMGISHRDLKPDNILIEQDDPVLVKITDFGLAKVQGNGSFMKTFCGTLAYVAPEVIRGKDTSVSPDEYEERNEYSSLVDMWSMGCLVYVILTGHLPFSGSTQDQLYKQIGRGSYHEGPLKDFRISEEARDFIDSLLQVDPNNRSTAAKALNHPWIKMSPLGSQSYGDFSQISLSQSLSQQKLLENMDDAQYEFVKAQRKLQMEQQLQEQDQEDQDGKIQGFKIPAHAPIRYTQPKSIEAETREQKLLHSNNTENVKSSKKKGNGRFLTLKPLPDSIIQESLEIQQGVNPFFIGRSEDCNCKIEDNRLSRVHCFIFKKRHAVGKSMYESPAQGLDDIWYCHTGTNVSYLNNNRMIQGTKFLLQDGDEIKIIWDKNNKFVIGFKVEINDTTGLFNEGLGMLQEQRVVLKQTAEEKDLVKKLTQMMAAQRANQPSASSSSMSAKKPPVSDTNNNGNNSVLNDLVESPINANTGNILKRIHSVSLSQSQIDPSKKVKRAKLDQTSKGPENLQFS.

At S24 the chain carries Phosphoserine. An FHA 1 domain is found at 66 to 116 (WTFGRNPACDYHLGNISRLSNKHFQILLGEDGNLLLNDISTNGTWLNGQKV). Phosphoserine is present on S175. One can recognise a Protein kinase domain in the interval 198 to 466 (SIIDEVVGQG…AAKALNHPWI (269 aa)). ATP contacts are provided by residues 204–212 (VGQGAFATV) and K227. D319 acts as the Proton acceptor in catalysis. Residues S547 and S560 each carry the phosphoserine modification. In terms of domain architecture, FHA 2 spans 601-664 (FFIGRSEDCN…NVSYLNNNRM (64 aa)). A disordered region spans residues 735-770 (AAQRANQPSASSSSMSAKKPPVSDTNNNGNNSVLND). Positions 742–770 (PSASSSSMSAKKPPVSDTNNNGNNSVLND) are enriched in low complexity. A phosphoserine mark is found at S774 and S793. Residues 791–821 (SLSQSQIDPSKKVKRAKLDQTSKGPENLQFS) are disordered. Positions 809–821 (DQTSKGPENLQFS) are enriched in polar residues.

It belongs to the protein kinase superfamily. CAMK Ser/Thr protein kinase family. CHEK2 subfamily. Interacts (via domain FHA 1) with PTC2 (when phosphorylated); the interaction is direct and serves to regulate DNA damage checkpoint signaling. Interacts with PIN4. Post-translationally, autophosphorylated. Phosphorylated in response to DNA double-strand breaks; dephosphorylation is mediated by PTC2 and PTC3.

Its subcellular location is the nucleus. The enzyme catalyses L-seryl-[protein] + ATP = O-phospho-L-seryl-[protein] + ADP + H(+). It catalyses the reaction L-threonyl-[protein] + ATP = O-phospho-L-threonyl-[protein] + ADP + H(+). The catalysed reaction is L-tyrosyl-[protein] + ATP = O-phospho-L-tyrosyl-[protein] + ADP + H(+). With respect to regulation, inactivated by dephosphorylation via recruitment of PTC2. In terms of biological role, controls S-phase checkpoint as well as G1 and G2 DNA damage checkpoints. Phosphorylates proteins on serine, threonine, and tyrosine. Prevents entry into anaphase and mitotic exit after DNA damage via regulation of the Polo kinase CDC5. Seems to be involved in the phosphorylation of RPH1. This Saccharomyces cerevisiae (strain ATCC 204508 / S288c) (Baker's yeast) protein is Serine/threonine-protein kinase RAD53 (RAD53).